The sequence spans 141 residues: Nucleoside diphosphate kinase (141 aa).

Residues Lys11, Phe59, Arg87, Thr93, Arg104, and Asn114 each coordinate ATP. Catalysis depends on His117, which acts as the Pros-phosphohistidine intermediate.

The protein belongs to the NDK family. Homotetramer. It depends on Mg(2+) as a cofactor.

It is found in the cytoplasm. The enzyme catalyses a 2'-deoxyribonucleoside 5'-diphosphate + ATP = a 2'-deoxyribonucleoside 5'-triphosphate + ADP. It catalyses the reaction a ribonucleoside 5'-diphosphate + ATP = a ribonucleoside 5'-triphosphate + ADP. Its function is as follows. Major role in the synthesis of nucleoside triphosphates other than ATP. The ATP gamma phosphate is transferred to the NDP beta phosphate via a ping-pong mechanism, using a phosphorylated active-site intermediate. This is Nucleoside diphosphate kinase from Yersinia enterocolitica serotype O:8 / biotype 1B (strain NCTC 13174 / 8081).